Reading from the N-terminus, the 200-residue chain is Transcription factor FapR (200 aa).

Belongs to the FapR family.

Functionally, transcriptional factor involved in regulation of membrane lipid biosynthesis by repressing genes involved in fatty acid and phospholipid metabolism. This chain is Transcription factor FapR, found in Caldanaerobacter subterraneus subsp. tengcongensis (strain DSM 15242 / JCM 11007 / NBRC 100824 / MB4) (Thermoanaerobacter tengcongensis).